Here is a 392-residue protein sequence, read N- to C-terminus: Stilbene synthase 4 (392 aa).

Residue 55–58 (KFNR) participates in substrate binding. The active site involves cysteine 164. Substrate is bound by residues leucine 267 and 305–307 (GGP).

The protein belongs to the thiolase-like superfamily. Chalcone/stilbene synthases family. As to quaternary structure, homodimer.

The protein localises to the cytoplasm. It carries out the reaction 4-coumaroyl-CoA + 3 malonyl-CoA + 3 H(+) = trans-resveratrol + 4 CO2 + 4 CoA. It functions in the pathway phytoalexin biosynthesis; 3,4',5-trihydroxystilbene biosynthesis; 3,4',5-trihydroxystilbene from trans-4-coumarate: step 2/2. In terms of biological role, mediates resistance to pathogens which are sensitive to stilbenes. This is Stilbene synthase 4 from Vitis vinifera (Grape).